We begin with the raw amino-acid sequence, 153 residues long: Cytochrome c-type biogenesis protein CcmE (153 aa).

Residues 1–7 are Cytoplasmic-facing; sequence MTRKKRR. Residues 8 to 28 form a helical; Signal-anchor for type II membrane protein membrane-spanning segment; the sequence is LYFVVLGMLALFAAAGLTLTA. Over 29-153 the chain is Periplasmic; sequence FQDNLVFFYS…PPTAAAAPAP (125 aa). Heme-binding residues include His-121 and Tyr-125. The segment at 132–153 is disordered; sequence ESLKASGKWQHGPPTAAAAPAP. Residues 144–153 are compositionally biased toward low complexity; it reads PPTAAAAPAP.

Belongs to the CcmE/CycJ family.

The protein localises to the cell inner membrane. Heme chaperone required for the biogenesis of c-type cytochromes. Transiently binds heme delivered by CcmC and transfers the heme to apo-cytochromes in a process facilitated by CcmF and CcmH. This Rhodospirillum rubrum (strain ATCC 11170 / ATH 1.1.1 / DSM 467 / LMG 4362 / NCIMB 8255 / S1) protein is Cytochrome c-type biogenesis protein CcmE.